Consider the following 255-residue polypeptide: 5-oxoprolinase subunit A 1 (255 aa).

Belongs to the LamB/PxpA family. In terms of assembly, forms a complex composed of PxpA, PxpB and PxpC.

The enzyme catalyses 5-oxo-L-proline + ATP + 2 H2O = L-glutamate + ADP + phosphate + H(+). Catalyzes the cleavage of 5-oxoproline to form L-glutamate coupled to the hydrolysis of ATP to ADP and inorganic phosphate. In Bradyrhizobium diazoefficiens (strain JCM 10833 / BCRC 13528 / IAM 13628 / NBRC 14792 / USDA 110), this protein is 5-oxoprolinase subunit A 1.